The chain runs to 456 residues: Outer membrane protein assembly factor BamB (456 aa).

Positions 1 to 19 are cleaved as a signal peptide; the sequence is MKKLLFITAPLLLSVLTAS. C20 carries N-palmitoyl cysteine lipidation. A lipid anchor (S-diacylglycerol cysteine) is attached at C20.

Belongs to the BamB family. Part of the Bam complex.

It localises to the cell outer membrane. Part of the outer membrane protein assembly complex, which is involved in assembly and insertion of beta-barrel proteins into the outer membrane. This Francisella tularensis subsp. tularensis (strain SCHU S4 / Schu 4) protein is Outer membrane protein assembly factor BamB.